The chain runs to 1528 residues: MELSPLQPVNENMLMNKKKNEDGKKRLSIERIYQKKTQLEHILLRPDTYIGSVELVTQQMWVYDEDVGINYREVTFVPGLYKIFDEILVNAADNKQRDPKMSCIRVTIDPENNVISIWNNGKGIPVVEHKVEKIYVPALIFGQLLTSSNYDDDEKKVTGGRNGYGAKLCNIFSTKFTVETASREYKKMFKQTWMDNMGRAGDMELKPFSGEDYTCITFQPDLSKFKMQSLDKDIVALMVRRAYDIAGSTKDVKVFLNGNSLPVKGFRSYVDLYLKDKVDETGNSLKVIHEQVNPRWEVCLTMSERGFQQISFVNSIATSKGGRHVDYVADQIVSKLVDVVKKKNKGGVAVKAHQVKNHMWIFVNALIENPTFDSQTKENMTLQAKSFGSTCQLSEKFIKAAIGCGIVESILNWVKFKAQIQLNKKCSAVKHTKIKGIPKLDDANDAGSRNSTECTLILTEGDSAKTLAVSGLGVVGRDKYGVFPLRGKILNVREASHKQIMENAEINNIIKIVGLQYKKNYEDEDSLKTLRYGKIMIMTDQDQDGSHIKGLLINFIHHNWPSLLRHRFLEEFITPIVKVSKNKQEIAFYSLPEFEEWKSSTPNHKKWKVKYYKGLGTSTSKEAKEYFADMKRHRIQFKYSGPEDDAAISLAFSKKQVDDRKEWLTNFMEDRRQRKLLGLPEDYLYGQSTSYLTYNDFINKELILFSNSDNERSIPSMVDGLKPGQRKVLFTCFKRNDKREVKVAQLAGSVAEMSSYHHGEMSLMMTIINLAQNFVGSNNLNLLQPIGQFGTRLHGGKDSASPRYIFTMLSPLARLLFPPKDDHTLRFLYDDNQRVEPEWYIPIIPMVLINGAEGIGTGWSCKIPNFDVREVVNNIRRLLDGEEPLPMLPSYKNFKGTIEELASNQYVINGEVAILDSTTIEISELPIRTWTQTYKEQVLEPMLNGTEKTPSLITDYREYHTDTTVKFVIKMTEEKLAEAERVGLHKVFKLQSSLTCNSMVLFDHVGCLKKYDTVLDILRDFFELRLKYYGLRKEWLLGMLGAESSKLNNQARFILEKIDGKIVIENKPKKELIKVLIQRGYDSDPVKAWKEAQQKVPDEEENEESDTETSTSDSAAEAGPTFNYLLDMPLWYLTKEKKDELCKQRNEKEQELNTLKQKSPSDLWKEDLAVFIEELEVVEAKEKQDEQVGLPGKAGKAKGKKAQMCADVLPSPRGKRVIPQVTVEMKAEAEKKIRKKIKSENVEGTPAEDGAEPGSLRQRIEKKQKKEPGAKKQTTLPFKPVKKGRKKNPWSDSESDVSSNESNVDVPPRQKEQRSAAAKAKFTVDLDSDEDFSGLDEKDEDEDFLPLDATPPKAKIPPKNTKKALKTQGSSMSVVDLESDVKDSVPASPGVPAADFPAETEQSKPSKKTVGVKKTATKSQSSVSTAGTKKRAAPKGTKSDSALSARVSEKPAPAKAKNSRKRKPSSSDSSDSDFERAISKGATSKKAKGEEQDFPVDLEDTIAPRAKSDRARKPIKYLEESDDDDDLF.

M1 carries the N-acetylmethionine modification. Phosphoserine is present on S4. Residue K17 forms a Glycyl lysine isopeptide (Lys-Gly) (interchain with G-Cter in SUMO2) linkage. ATP-binding positions include N90, N119, and S147–N149. Glycyl lysine isopeptide (Lys-Gly) (interchain with G-Cter in SUMO2) cross-links involve residues K155 and K156. G160 to K167 is a binding site for ATP. Phosphothreonine is present on T281. The tract at residues K341–K343 is interaction with DNA. A Glycyl lysine isopeptide (Lys-Gly) (interchain with G-Cter in SUMO2) cross-link involves residue K351. Q375–K377 is an ATP binding site. Residues K385, K396, K415, K417, K424, and K439 each participate in a glycyl lysine isopeptide (Lys-Gly) (interchain with G-Cter in SUMO2) cross-link. Residues C454–E571 form the Toprim domain. Residue E460 coordinates Mg(2+). Glycyl lysine isopeptide (Lys-Gly) (interchain with G-Cter in SUMO2) cross-links involve residues K465, K479, and K528. D540 and D542 together coordinate Mg(2+). Residues K583, K598, K613, K621, K624, K631, K638, K654, K661, and K675 each participate in a glycyl lysine isopeptide (Lys-Gly) (interchain with G-Cter in SUMO2) cross-link. The Topo IIA-type catalytic domain maps to I714–L1168. Y804 acts as the O-(5'-phospho-DNA)-tyrosine intermediate in catalysis. The tract at residues K989–S998 is interaction with DNA. K1074 participates in a covalent cross-link: Glycyl lysine isopeptide (Lys-Gly) (interchain with G-Cter in SUMO2). Disordered stretches follow at residues K1090–A1118 and K1183–S1211. Positions D1098–T1107 are enriched in acidic residues. Residue S1105 is modified to Phosphoserine; by CK1. Low complexity predominate over residues E1108–A1118. Residues K1193 and K1201 each participate in a glycyl lysine isopeptide (Lys-Gly) (interchain with G-Cter in SUMO2) cross-link. Residue S1211 is modified to Phosphoserine. A Glycyl lysine isopeptide (Lys-Gly) (interchain with G-Cter in SUMO2) cross-link involves residue K1226. Residues A1229 to F1528 are disordered. Residue K1238 forms a Glycyl lysine isopeptide (Lys-Gly) (interchain with G-Cter in SUMO1); alternate linkage. K1238 is covalently cross-linked (Glycyl lysine isopeptide (Lys-Gly) (interchain with G-Cter in SUMO2); alternate). A Phosphothreonine modification is found at T1245. Residues Q1258–A1270 are compositionally biased toward basic and acidic residues. Residues K1272, K1279, and K1282 each participate in a glycyl lysine isopeptide (Lys-Gly) (interchain with G-Cter in SUMO2) cross-link. 4 positions are modified to phosphoserine: S1291, S1293, S1295, and S1298. Low complexity predominate over residues D1296–V1306. Residue T1323 is modified to Phosphothreonine. Residues L1326 to L1345 are compositionally biased toward acidic residues. 2 positions are modified to phosphoserine: S1328 and S1333. T1350 bears the Phosphothreonine mark. Residues K1359 and K1363 each participate in a glycyl lysine isopeptide (Lys-Gly) (interchain with G-Cter in SUMO2) cross-link. Residues S1370 and S1373 each carry the phosphoserine modification. K1382 participates in a covalent cross-link: Glycyl lysine isopeptide (Lys-Gly) (interchain with G-Cter in SUMO2). 2 positions are modified to phosphoserine: S1384 and S1388. K1418 participates in a covalent cross-link: Glycyl lysine isopeptide (Lys-Gly) (interchain with G-Cter in SUMO2); alternate. Residue K1418 is modified to N6-acetyllysine; alternate. Residues K1429–K1435 form an interaction with PLSCR1 region. A Glycyl lysine isopeptide (Lys-Gly) (interchain with G-Cter in SUMO2); alternate cross-link involves residue K1438. K1438 carries the N6-acetyllysine; alternate modification. Residues K1450 and K1455 each participate in a glycyl lysine isopeptide (Lys-Gly) (interchain with G-Cter in SUMO2) cross-link. Phosphoserine occurs at positions 1465, 1467, 1470, and 1472. Glycyl lysine isopeptide (Lys-Gly) (interchain with G-Cter in SUMO2) cross-links involve residues K1480 and K1488. The span at A1506–E1519 shows a compositional bias: basic and acidic residues. S1521 carries the phosphoserine modification.

It belongs to the type II topoisomerase family. As to quaternary structure, homodimer. Interacts with COPS5. Interacts with RECQL5; this stimulates DNA decatenation. Interacts with SETMAR; stimulates the topoisomerase activity. Interacts with DHX9; this interaction occurs in a E2 enzyme UBE2I- and RNA-dependent manner, negatively regulates DHX9-mediated double-stranded DNA and RNA duplex helicase activity and stimulates TOP2A-mediated supercoiled DNA relaxation activity. Interacts with HNRNPU (via C-terminus); this interaction protects the topoisomerase TOP2A from degradation and positively regulates the relaxation of supercoiled DNA in a RNA-dependent manner. Interacts with MCM3AP. Interacts with ERCC6. Interacts with PLSCR1. Interacts with GCNA; this interaction allows the resolution of topoisomerase II (TOP2A) DNA-protein cross-links. Interacts with POL1RA/RPA1 (via dock II) and UBTF in the context of Pol I complex; may assist Pol I transcription initiation by releasing supercoils occurring during DNA unwinding. Interacts with TPRN; TPRN interacts with a number of DNA damage response proteins, is recruited to sites of DNA damage and may play a role in DNA damage repair. It depends on Mg(2+) as a cofactor. Mn(2+) is required as a cofactor. Ca(2+) serves as cofactor. Phosphorylation has no effect on catalytic activity. However, phosphorylation at Ser-1105 by CSNK1D/CK1 promotes DNA cleavable complex formation.

It is found in the cytoplasm. The protein localises to the nucleus. Its subcellular location is the nucleoplasm. It localises to the nucleolus. The enzyme catalyses ATP-dependent breakage, passage and rejoining of double-stranded DNA.. Functionally, key decatenating enzyme that alters DNA topology by binding to two double-stranded DNA molecules, generating a double-stranded break in one of the strands, passing the intact strand through the broken strand, and religating the broken strand. May play a role in regulating the period length of BMAL1 transcriptional oscillation. This is DNA topoisomerase 2-alpha (Top2a) from Mus musculus (Mouse).